We begin with the raw amino-acid sequence, 102 residues long: Integration host factor subunit alpha (102 aa).

Belongs to the bacterial histone-like protein family. As to quaternary structure, heterodimer of an alpha and a beta chain.

In terms of biological role, this protein is one of the two subunits of integration host factor, a specific DNA-binding protein that functions in genetic recombination as well as in transcriptional and translational control. In Albidiferax ferrireducens (strain ATCC BAA-621 / DSM 15236 / T118) (Rhodoferax ferrireducens), this protein is Integration host factor subunit alpha.